We begin with the raw amino-acid sequence, 784 residues long: Cadherin-5 (784 aa).

An N-terminal signal peptide occupies residues 1-24 (MQRLTELATALGAFLGLLAVAAMA). A propeptide spanning residues 25–45 (GPNFPQIDTPNMLPAHHRQKR) is cleaved from the precursor. 5 consecutive Cadherin domains span residues 46–149 (DWIW…WPVF), 150–256 (SHQV…FPVF), 257–371 (TQST…PPVF), 372–476 (QRHF…DNPP), and 477–593 (EFAQ…MAAQ). Residues 46–599 (DWIWNQMHID…MAAQAGVSIQ (554 aa)) lie on the Extracellular side of the membrane. Ca(2+) contacts are provided by glutamate 56 and glutamate 57. Residue asparagine 59 is glycosylated (N-linked (GlcNAc...) asparagine). The Ca(2+) site is built by aspartate 107, glutamate 109, aspartate 141, isoleucine 142, asparagine 143, aspartate 144, and asparagine 145. Asparagine 155 is a glycosylation site (N-linked (GlcNAc...) asparagine). Residues aspartate 175, aspartate 177, histidine 184, and aspartate 229 each coordinate Ca(2+). 3 N-linked (GlcNAc...) asparagine glycosylation sites follow: asparagine 441, asparagine 523, and asparagine 535. A helical transmembrane segment spans residues 600–620 (ALVAIFLCILTITVITLLIIL). Residues 621–660 (RRRIRKQAHAHSKSALEIHEQLVTYDEEGGGEMDTTSYDV) are required for interaction with PALS1. The Cytoplasmic portion of the chain corresponds to 621 to 784 (RRRIRKQAHA…GSDPQEELII (164 aa)).

Part of a complex composed of AMOTL2, MAGI1 and CDH5, within the complex AMOTL2 acts as a scaffold protein for the interaction of MAGI1 with CDH5. The complex is required for coupling actin fibers to cell junctions in endothelial cells. Within the complex AMOTL2 (via its N-terminus) interacts with CDH5. Interacts (via cadherin 5 domain) with PTPRB. Interacts with TRPC4. Interacts with KRIT1. Interacts with PARD3. Interacts with RTN4 (isoform B). Interacts with PALS1; the interaction promotes PALS1 localization to cell junctions and is required for CDH5-mediated vascular lumen formation and endothelial cell polarity. Interacts with CTNND1/p120-catenin; the interaction controls CADH5 endocytosis. Phosphorylated on tyrosine residues by KDR/VEGFR-2. Dephosphorylated by PTPRB. In terms of processing, O-glycosylated. Expressed in postnatal endothelial cells of the retinal vascular plexus (at protein level).

It is found in the cell junction. It localises to the adherens junction. The protein resides in the cell membrane. The protein localises to the cytoplasm. Cadherins are calcium-dependent cell adhesion proteins. They preferentially interact with themselves in a homophilic manner in connecting cells; cadherins may thus contribute to the sorting of heterogeneous cell types. This cadherin may play an important role in endothelial cell biology through control of the cohesion and organization of the intercellular junctions. It associates with alpha-catenin forming a link to the cytoskeleton. Plays a role in coupling actin fibers to cell junctions in endothelial cells, via acting as a cell junctional complex anchor for AMOTL2 and MAGI1. Acts in concert with KRIT1 and PALS1 to establish and maintain correct endothelial cell polarity and vascular lumen. These effects are mediated by recruitment and activation of the Par polarity complex and RAP1B. Required for activation of PRKCZ and for localization of phosphorylated PRKCZ, PARD3, TIAM1 and RAP1B to the cell junction. Associates with CTNND1/p120-catenin to control CADH5 endocytosis. This chain is Cadherin-5, found in Mus musculus (Mouse).